The following is a 291-amino-acid chain: 3-hydroxy-5-phosphonooxypentane-2,4-dione thiolase (291 aa).

Lys203 (schiff-base intermediate with substrate) is an active-site residue.

The protein belongs to the DeoC/FbaB aldolase family. As to quaternary structure, homodecamer.

It localises to the cytoplasm. The catalysed reaction is dihydroxyacetone phosphate + acetyl-CoA = 3-hydroxy-2,4-dioxopentyl phosphate + CoA. In terms of biological role, involved in the degradation of phospho-AI-2, thereby terminating induction of the lsr operon and closing the AI-2 signaling cycle. Catalyzes the transfer of an acetyl moiety from 3-hydroxy-5-phosphonooxypentane-2,4-dione to CoA to form glycerone phosphate and acetyl-CoA. The chain is 3-hydroxy-5-phosphonooxypentane-2,4-dione thiolase from Yersinia pestis bv. Antiqua (strain Antiqua).